The following is a 176-amino-acid chain: Ferritin, spleen middle subunit (176 aa).

A Ferritin-like diiron domain is found at 7–156; the sequence is QNYHRDCEAA…DFITNLSRMD (150 aa). Fe cation contacts are provided by Glu-24, Glu-59, His-62, Glu-104, and Gln-138.

This sequence belongs to the ferritin family. In spleen, forms a homomer. The functional molecule forms a roughly spherical shell with a diameter of 12 nm and contains a central cavity into which the insoluble mineral iron core is deposited. As to expression, spleen (at protein level).

It catalyses the reaction 4 Fe(2+) + O2 + 4 H(+) = 4 Fe(3+) + 2 H2O. Its function is as follows. Stores iron in a soluble, non-toxic, readily available form. Important for iron homeostasis. Has ferroxidase activity. Iron is taken up in the ferrous form and deposited as ferric hydroxides after oxidation. This chain is Ferritin, spleen middle subunit, found in Trematomus bernacchii (Emerald rockcod).